A 532-amino-acid polypeptide reads, in one-letter code: Transcriptional regulatory protein RtcR (532 aa).

A Sigma-54 factor interaction domain is found at 186 to 424 (IATRNPHFNR…LSASVTRMAT (239 aa)). Residues 215 to 222 (GPTGAGKS) and 281 to 290 (ANGGMLFLDE) contribute to the ATP site. Residues 485 to 504 (KSLSAAGRQLFDVSRQGKAS) constitute a DNA-binding region (H-T-H motif).

Functionally, transcriptional repressor of the rtcAB genes. Interacts with sigma-54. The protein is Transcriptional regulatory protein RtcR (rtcR) of Escherichia coli (strain K12).